The following is a 483-amino-acid chain: UDP-N-acetylmuramoyl-L-alanyl-D-glutamate--2,6-diaminopimelate ligase (483 aa).

A UDP-N-acetyl-alpha-D-muramoyl-L-alanyl-D-glutamate-binding site is contributed by serine 30. 109 to 115 (GTNGKTT) serves as a coordination point for ATP. UDP-N-acetyl-alpha-D-muramoyl-L-alanyl-D-glutamate is bound by residues 151–152 (TT), serine 178, and arginine 186. Lysine 218 is modified (N6-carboxylysine). Meso-2,6-diaminopimelate is bound by residues arginine 380, 403 to 406 (DNPR), glycine 453, and glutamate 457. The Meso-diaminopimelate recognition motif signature appears at 403 to 406 (DNPR).

Belongs to the MurCDEF family. MurE subfamily. It depends on Mg(2+) as a cofactor. In terms of processing, carboxylation is probably crucial for Mg(2+) binding and, consequently, for the gamma-phosphate positioning of ATP.

Its subcellular location is the cytoplasm. It carries out the reaction UDP-N-acetyl-alpha-D-muramoyl-L-alanyl-D-glutamate + meso-2,6-diaminopimelate + ATP = UDP-N-acetyl-alpha-D-muramoyl-L-alanyl-gamma-D-glutamyl-meso-2,6-diaminopimelate + ADP + phosphate + H(+). Its pathway is cell wall biogenesis; peptidoglycan biosynthesis. Catalyzes the addition of meso-diaminopimelic acid to the nucleotide precursor UDP-N-acetylmuramoyl-L-alanyl-D-glutamate (UMAG) in the biosynthesis of bacterial cell-wall peptidoglycan. The chain is UDP-N-acetylmuramoyl-L-alanyl-D-glutamate--2,6-diaminopimelate ligase from Chlamydia pneumoniae (Chlamydophila pneumoniae).